A 329-amino-acid polypeptide reads, in one-letter code: DNA-directed RNA polymerase subunit alpha (329 aa).

The segment at 1–235 (MQNSIMDFLR…EQLEAFVDLR (235 aa)) is alpha N-terminal domain (alpha-NTD). Residues 249 to 329 (FEPILLRPVD…NWPPSSILDE (81 aa)) are alpha C-terminal domain (alpha-CTD).

It belongs to the RNA polymerase alpha chain family. In terms of assembly, homodimer. The RNAP catalytic core consists of 2 alpha, 1 beta, 1 beta' and 1 omega subunit. When a sigma factor is associated with the core the holoenzyme is formed, which can initiate transcription.

The catalysed reaction is RNA(n) + a ribonucleoside 5'-triphosphate = RNA(n+1) + diphosphate. DNA-dependent RNA polymerase catalyzes the transcription of DNA into RNA using the four ribonucleoside triphosphates as substrates. In Buchnera aphidicola subsp. Acyrthosiphon pisum (strain APS) (Acyrthosiphon pisum symbiotic bacterium), this protein is DNA-directed RNA polymerase subunit alpha.